An 889-amino-acid polypeptide reads, in one-letter code: Coatomer subunit gamma-2 (889 aa).

HEAT repeat units lie at residues 67–102 (VEAT…SPSA), 103–140 (DEVI…STLL), 289–326 (RELT…THPL), 328–360 (VTNC…TGNE), and 361–398 (SSVD…KFPL). The tract at residues 596 to 617 (PLAEKKTTGKKPTGPASALSGP) is disordered.

This sequence belongs to the COPG family. As to quaternary structure, oligomeric complex that consists of at least the alpha, beta, beta', gamma, delta, epsilon and zeta subunits.

Its subcellular location is the cytoplasm. The protein resides in the golgi apparatus membrane. The protein localises to the cytoplasmic vesicle. It localises to the COPI-coated vesicle membrane. Functionally, the coatomer is a cytosolic protein complex that binds to dilysine motifs and reversibly associates with Golgi non-clathrin-coated vesicles, which further mediate biosynthetic protein transport from the ER, via the Golgi up to the trans Golgi network. Coatomer complex is required for budding from Golgi membranes, and is essential for the retrograde Golgi-to-ER transport of dilysine-tagged proteins. The protein is Coatomer subunit gamma-2 of Oryza sativa subsp. japonica (Rice).